The following is a 273-amino-acid chain: Large ribosomal subunit protein uL2 (273 aa).

Residues 228–273 (VDHPHGGGEGKTSGGRHPVTPWGFPTKGKKTRKNKRTSKFIVKKRK) are disordered. Over residues 254–273 (KGKKTRKNKRTSKFIVKKRK) the composition is skewed to basic residues.

Belongs to the universal ribosomal protein uL2 family. In terms of assembly, part of the 50S ribosomal subunit. Forms a bridge to the 30S subunit in the 70S ribosome.

In terms of biological role, one of the primary rRNA binding proteins. Required for association of the 30S and 50S subunits to form the 70S ribosome, for tRNA binding and peptide bond formation. It has been suggested to have peptidyltransferase activity; this is somewhat controversial. Makes several contacts with the 16S rRNA in the 70S ribosome. This is Large ribosomal subunit protein uL2 from Rickettsia africae (strain ESF-5).